Consider the following 327-residue polypeptide: ABC transporter periplasmic-binding protein YphF (327 aa).

An N-terminal signal peptide occupies residues 1 to 26 (MPTKMRTTRNLLLMATLLGSALFARA).

This sequence belongs to the bacterial solute-binding protein 2 family.

The protein resides in the periplasm. Functionally, probably part of the binding-protein-dependent transport system YphDEF. The protein is ABC transporter periplasmic-binding protein YphF (yphF) of Escherichia coli (strain K12).